Reading from the N-terminus, the 338-residue chain is Secretory carrier-associated membrane protein 1 (338 aa).

Residues methionine 1 to methionine 64 form a disordered region. Serine 2 is subject to N-acetylserine. A Phosphoserine modification is found at serine 2. At serine 2–leucine 155 the chain is on the cytoplasmic side. Threonine 45 carries the phosphothreonine modification. Residues tryptophan 156–valine 176 traverse the membrane as a helical segment. Residues aspartate 177–alanine 181 are Lumenal-facing. The helical transmembrane segment at valine 182 to tryptophan 202 threads the bilayer. Residues tyrosine 203–phenylalanine 218 lie on the Cytoplasmic side of the membrane. A helical transmembrane segment spans residues phenylalanine 219 to phenylalanine 239. The Lumenal segment spans residues histidine 240–glycine 261. Residues isoleucine 262 to phenylalanine 282 form a helical membrane-spanning segment. Over lysine 283–isoleucine 338 the chain is Cytoplasmic.

This sequence belongs to the SCAMP family. As to quaternary structure, interacts with SYNRG and ITSN1. Interacts with SLC9A7. As to expression, widely expressed, with highest expression in brain.

The protein resides in the golgi apparatus. It is found in the trans-Golgi network membrane. Its subcellular location is the recycling endosome membrane. Functionally, functions in post-Golgi recycling pathways. Acts as a recycling carrier to the cell surface. This chain is Secretory carrier-associated membrane protein 1 (SCAMP1), found in Homo sapiens (Human).